The chain runs to 1089 residues: Probable transport protein MmpL8 (1089 aa).

Residues Met1–Thr26 form a disordered region. Helical transmembrane passes span Trp44 to Leu64, Ile222 to Leu242, Leu257 to Ser277, Ile316 to Phe336, Leu349 to Val369, Lys400 to Ala420, Ala555 to Gly575, Ile874 to Val894, Tyr898 to Phe918, Ile930 to Ile950, Gly973 to Ala993, and Gly996 to Val1016. The interval Arg1056–Leu1078 is disordered. Acidic residues predominate over residues Glu1066–Leu1078.

Belongs to the resistance-nodulation-cell division (RND) (TC 2.A.6) family. MmpL subfamily.

Its subcellular location is the cell membrane. The polypeptide is Probable transport protein MmpL8 (mmpL8) (Mycobacterium tuberculosis (strain ATCC 25177 / H37Ra)).